An 88-amino-acid chain; its full sequence is Small ribosomal subunit protein uS17 (88 aa).

It belongs to the universal ribosomal protein uS17 family. Part of the 30S ribosomal subunit.

Functionally, one of the primary rRNA binding proteins, it binds specifically to the 5'-end of 16S ribosomal RNA. The protein is Small ribosomal subunit protein uS17 of Prochlorococcus marinus (strain MIT 9215).